Consider the following 123-residue polypeptide: Holo-[acyl-carrier-protein] synthase (123 aa).

Mg(2+) contacts are provided by Asp-7 and Glu-56.

The protein belongs to the P-Pant transferase superfamily. AcpS family. Mg(2+) is required as a cofactor.

It is found in the cytoplasm. It catalyses the reaction apo-[ACP] + CoA = holo-[ACP] + adenosine 3',5'-bisphosphate + H(+). In terms of biological role, transfers the 4'-phosphopantetheine moiety from coenzyme A to a Ser of acyl-carrier-protein. In Carboxydothermus hydrogenoformans (strain ATCC BAA-161 / DSM 6008 / Z-2901), this protein is Holo-[acyl-carrier-protein] synthase.